We begin with the raw amino-acid sequence, 92 residues long: UPF0298 protein ABC2380 (92 aa).

This sequence belongs to the UPF0298 family.

It is found in the cytoplasm. The protein is UPF0298 protein ABC2380 of Shouchella clausii (strain KSM-K16) (Alkalihalobacillus clausii).